Here is a 349-residue protein sequence, read N- to C-terminus: tRNA pseudouridine synthase D (349 aa).

Phe-26 provides a ligand contact to substrate. Asp-79 serves as the catalytic Nucleophile. Residue Asn-128 participates in substrate binding. The 149-residue stretch at 154-302 (GVPNYFGSQR…VEGARRAILL (149 aa)) folds into the TRUD domain. Residue Phe-328 coordinates substrate.

This sequence belongs to the pseudouridine synthase TruD family.

The enzyme catalyses uridine(13) in tRNA = pseudouridine(13) in tRNA. Its function is as follows. Responsible for synthesis of pseudouridine from uracil-13 in transfer RNAs. The chain is tRNA pseudouridine synthase D from Yersinia enterocolitica serotype O:8 / biotype 1B (strain NCTC 13174 / 8081).